Consider the following 111-residue polypeptide: Large ribosomal subunit protein P2 (111 aa).

Residues 62 to 111 are disordered; it reads LASVPSGGAGGAAAAGGAAAAGGAAEAAPEEAKEEEKEESDDDMGFGLFD. Positions 76–88 are enriched in low complexity; the sequence is AGGAAAAGGAAEA. Ser101 bears the Phosphoserine mark.

It belongs to the eukaryotic ribosomal protein P1/P2 family. In terms of assembly, P1 and P2 exist as dimers at the large ribosomal subunit.

Functionally, plays an important role in the elongation step of protein synthesis. In Podospora anserina (Pleurage anserina), this protein is Large ribosomal subunit protein P2.